The primary structure comprises 400 residues: Ornithine aminotransferase (400 aa).

Lys-254 bears the N6-(pyridoxal phosphate)lysine mark.

Belongs to the class-III pyridoxal-phosphate-dependent aminotransferase family. OAT subfamily. The cofactor is pyridoxal 5'-phosphate.

The protein localises to the cytoplasm. The catalysed reaction is a 2-oxocarboxylate + L-ornithine = L-glutamate 5-semialdehyde + an L-alpha-amino acid. It participates in amino-acid biosynthesis; L-proline biosynthesis; L-glutamate 5-semialdehyde from L-ornithine: step 1/1. Its function is as follows. Catalyzes the interconversion of ornithine to glutamate semialdehyde. This Exiguobacterium sp. (strain ATCC BAA-1283 / AT1b) protein is Ornithine aminotransferase.